The primary structure comprises 73 residues: Disintegrin trigramin-beta-2 (73 aa).

Residues 1–73 (EAGKDCDCGS…AGCPRNPFHA (73 aa)) enclose the Disintegrin domain. 6 disulfide bridges follow: Cys6–Cys21, Cys8–Cys16, Cys15–Cys38, Cys29–Cys35, Cys34–Cys59, and Cys47–Cys66. Residues 51 to 53 (RGD) carry the Cell attachment site motif.

Belongs to the venom metalloproteinase (M12B) family. P-II subfamily. P-IIa sub-subfamily. Monomer (disintegrin). In terms of tissue distribution, expressed by the venom gland.

Its subcellular location is the secreted. Its function is as follows. Inhibits fibrinogen interaction with platelets. Acts by binding to the alpha-IIb/beta-3 receptor (ITGA2B/ITGB3) on the platelet surface and inhibits aggregation induced by ADP, thrombin, platelet-activating factor and collagen. The polypeptide is Disintegrin trigramin-beta-2 (Craspedocephalus gramineus (Bamboo pit viper)).